A 416-amino-acid chain; its full sequence is NADH-quinone oxidoreductase subunit D (416 aa).

This sequence belongs to the complex I 49 kDa subunit family. NDH-1 is composed of 14 different subunits. Subunits NuoB, C, D, E, F, and G constitute the peripheral sector of the complex.

Its subcellular location is the cell inner membrane. The enzyme catalyses a quinone + NADH + 5 H(+)(in) = a quinol + NAD(+) + 4 H(+)(out). Functionally, NDH-1 shuttles electrons from NADH, via FMN and iron-sulfur (Fe-S) centers, to quinones in the respiratory chain. The immediate electron acceptor for the enzyme in this species is believed to be ubiquinone. Couples the redox reaction to proton translocation (for every two electrons transferred, four hydrogen ions are translocated across the cytoplasmic membrane), and thus conserves the redox energy in a proton gradient. This chain is NADH-quinone oxidoreductase subunit D, found in Caulobacter sp. (strain K31).